The sequence spans 314 residues: Olfactory receptor 5P66 (314 aa).

Over 1–28 (MAFLENGNHTAVSEFILLGLTDDPVLRI) the chain is Extracellular. N-linked (GlcNAc...) asparagine glycosylation occurs at asparagine 8. The helical transmembrane segment at 29–49 (VLFTIILCIYLVTVSGNLSTI) threads the bilayer. The Cytoplasmic segment spans residues 50–57 (LLIRVSSQ). Residues 58 to 78 (LHHPMYFFLSHLASADIGLSS) form a helical membrane-spanning segment. The Extracellular portion of the chain corresponds to 79–102 (SVTPNMLVNFLVERSTISYLGCGI). Cysteine 100 and cysteine 192 are joined by a disulfide. A helical membrane pass occupies residues 103–123 (QLSSAALFGATECFLLAAMAY). The Cytoplasmic segment spans residues 124–136 (DRFMAICNPLLYS). Residues 137 to 157 (TKMSTKVCVQLIVGSYIAGFL) form a helical membrane-spanning segment. At 158–199 (NASSFLLSFFSLLFCGQNIINDFFCDFAPLAELSCSDVSVFV) the chain is on the extracellular side. A helical transmembrane segment spans residues 200 to 220 (VVISFSAGTVTMLTVFVIAIS). At 221–240 (YSYILITILKMRSTEGRQKA) the chain is on the cytoplasmic side. Residues 241–261 (FSTCTSHLTAVTLFYGTVTFI) form a helical membrane-spanning segment. At 262–274 (YVMPKSSYSMDQN) the chain is on the extracellular side. A helical transmembrane segment spans residues 275–295 (KIISVFYMVVVPMLNPLIYSL). Topologically, residues 296–314 (RNNEIKGALKRHFDRKTFS) are cytoplasmic.

The protein belongs to the G-protein coupled receptor 1 family.

The protein resides in the cell membrane. Functionally, potential odorant receptor. The sequence is that of Olfactory receptor 5P66 from Mus musculus (Mouse).